A 105-amino-acid polypeptide reads, in one-letter code: MNVSFRSNYHQGTIRCSVTAITSRSHRGDRGSTPRFGVSFLFSRKIHMLIHLPLLFHCDATSHILLISIFFLLLFALPQHTMGINSTSCCVHFSSSYNYNVHKLA.

A helical membrane pass occupies residues 64 to 84 (ILLISIFFLLLFALPQHTMGI).

It localises to the membrane. This is an uncharacterized protein from Saccharomyces cerevisiae (strain ATCC 204508 / S288c) (Baker's yeast).